Reading from the N-terminus, the 362-residue chain is Putative membrane-bound acyltransferase YfiQ (362 aa).

A run of 10 helical transmembrane segments spans residues 11-31 (CISC…MLQA), 44-64 (FRTL…FLLA), 82-102 (VIFV…TSAM), 119-139 (VFLG…YMLH), 153-173 (WVLS…SAAS), 181-201 (GGAF…FCLA), 220-240 (WVVY…SYVG), 252-267 (IMLY…FHLF), 283-303 (YSFS…VLLL), and 308-328 (IPAV…PIMT).

Belongs to the acyltransferase 3 family.

The protein localises to the cell membrane. In Bacillus subtilis (strain 168), this protein is Putative membrane-bound acyltransferase YfiQ (yfiQ).